A 109-amino-acid chain; its full sequence is Hainantoxin-XVIII (109 aa).

Positions 1-18 are cleaved as a signal peptide; sequence MKLSIIIIATSLVIAVVA. A propeptide spanning residues 19 to 46 is cleaved from the precursor; the sequence is FPSKDSKAIENDKTEQRMEIVVQETARA. 4 cysteine pairs are disulfide-bonded: Cys47–Cys62, Cys55–Cys68, Cys59–Cys108, and Cys61–Cys81.

The protein belongs to the neurotoxin 25 family. F7 subfamily. As to expression, expressed by the venom gland.

It localises to the secreted. Its function is as follows. Putative ion channel inhibitor. The protein is Hainantoxin-XVIII of Cyriopagopus hainanus (Chinese bird spider).